The sequence spans 21 residues: Cupiennin-6b (21 aa).

Ser-21 bears the Serine amide mark.

Expressed by the venom gland.

The protein localises to the secreted. The polypeptide is Cupiennin-6b (Cupiennius salei (American wandering spider)).